The sequence spans 528 residues: Intestinal-type alkaline phosphatase (528 aa).

Residues 1–19 form the signal peptide; sequence MQGPWVLLLLGLRLQLSLG. Aspartate 61 serves as a coordination point for Mg(2+). 2 residues coordinate Zn(2+): aspartate 61 and serine 111. The Phosphoserine intermediate role is filled by serine 111. Cysteine 140 and cysteine 202 are joined by a disulfide. Asparagine 141 is a glycosylation site (N-linked (GlcNAc...) asparagine). A Mg(2+)-binding site is contributed by serine 174. A Ca(2+)-binding site is contributed by glutamate 235. Residue asparagine 268 is glycosylated (N-linked (GlcNAc...) asparagine). Residues phenylalanine 288, glutamate 289, and aspartate 304 each coordinate Ca(2+). Glutamate 330 is a Mg(2+) binding site. Zn(2+) is bound by residues aspartate 335, histidine 339, aspartate 376, and histidine 377. An N-linked (GlcNAc...) asparagine glycan is attached at asparagine 429. Histidine 451 contributes to the Zn(2+) binding site. Cysteine 486 and cysteine 493 are disulfide-bonded. Aspartate 503 carries the GPI-anchor amidated aspartate lipid modification. The propeptide at 504–528 is removed in mature form; that stretch reads AAHPVAASLPLLAGTLLLLGASAAP.

Belongs to the alkaline phosphatase family. Homodimer. The cofactor is Mg(2+). Requires Zn(2+) as cofactor. It depends on Ca(2+) as a cofactor.

It is found in the cell membrane. It carries out the reaction a phosphate monoester + H2O = an alcohol + phosphate. Functionally, alkaline phosphatase that can hydrolyze various phosphate compounds. This Homo sapiens (Human) protein is Intestinal-type alkaline phosphatase (ALPI).